Reading from the N-terminus, the 506-residue chain is Cysteine--tRNA ligase (506 aa).

Residue C34 participates in Zn(2+) binding. The short motif at 36–46 (PTVYDFAHIGN) is the 'HIGH' region element. Positions 230, 269, and 273 each coordinate Zn(2+). A 'KMSKS' region motif is present at residues 302–306 (KMSKS). K305 contacts ATP.

The protein belongs to the class-I aminoacyl-tRNA synthetase family. Monomer. It depends on Zn(2+) as a cofactor.

It is found in the cytoplasm. It carries out the reaction tRNA(Cys) + L-cysteine + ATP = L-cysteinyl-tRNA(Cys) + AMP + diphosphate. This chain is Cysteine--tRNA ligase, found in Brucella ovis (strain ATCC 25840 / 63/290 / NCTC 10512).